The sequence spans 150 residues: Endoribonuclease YbeY (150 aa).

Zn(2+) contacts are provided by His-102, His-106, and His-112.

It belongs to the endoribonuclease YbeY family. Requires Zn(2+) as cofactor.

The protein localises to the cytoplasm. Its function is as follows. Single strand-specific metallo-endoribonuclease involved in late-stage 70S ribosome quality control and in maturation of the 3' terminus of the 16S rRNA. In Thermotoga maritima (strain ATCC 43589 / DSM 3109 / JCM 10099 / NBRC 100826 / MSB8), this protein is Endoribonuclease YbeY.